Reading from the N-terminus, the 497-residue chain is RNA-splicing ligase RtcB homolog (497 aa).

Mn(2+) contacts are provided by Asp-111, Cys-114, His-219, His-251, and His-345. 218–222 lines the GMP pocket; the sequence is NHYAE. GMP-binding positions include 345–346, 394–397, Ser-401, 420–423, and Lys-496; these read HN, GGTM, and HGAG. The GMP-histidine intermediate role is filled by His-420.

Belongs to the RtcB family. In terms of assembly, catalytic component of the tRNA-splicing ligase complex. Requires Mn(2+) as cofactor.

It catalyses the reaction a 3'-end 3'-phospho-ribonucleotide-RNA + a 5'-end dephospho-ribonucleoside-RNA + GTP = a ribonucleotidyl-ribonucleotide-RNA + GMP + diphosphate. The catalysed reaction is a 3'-end 2',3'-cyclophospho-ribonucleotide-RNA + a 5'-end dephospho-ribonucleoside-RNA + GTP + H2O = a ribonucleotidyl-ribonucleotide-RNA + GMP + diphosphate + H(+). Catalytic subunit of the tRNA-splicing ligase complex that acts by directly joining spliced tRNA halves to mature-sized tRNAs by incorporating the precursor-derived splice junction phosphate into the mature tRNA as a canonical 3',5'-phosphodiester. May act as an RNA ligase with broad substrate specificity, and may function toward other RNAs. This chain is RNA-splicing ligase RtcB homolog, found in Monosiga brevicollis (Choanoflagellate).